Consider the following 326-residue polypeptide: tRNA-modifying protein YgfZ (326 aa).

Residues Trp-27 and Trp-189 each coordinate folate.

This sequence belongs to the tRNA-modifying YgfZ family.

The protein resides in the cytoplasm. Functionally, folate-binding protein involved in regulating the level of ATP-DnaA and in the modification of some tRNAs. It is probably a key factor in regulatory networks that act via tRNA modification, such as initiation of chromosomal replication. This Shigella boydii serotype 18 (strain CDC 3083-94 / BS512) protein is tRNA-modifying protein YgfZ.